A 314-amino-acid polypeptide reads, in one-letter code: Homoserine kinase (314 aa).

95-105 (PHSRGLGSSAA) provides a ligand contact to ATP.

Belongs to the GHMP kinase family. Homoserine kinase subfamily.

It is found in the cytoplasm. The catalysed reaction is L-homoserine + ATP = O-phospho-L-homoserine + ADP + H(+). The protein operates within amino-acid biosynthesis; L-threonine biosynthesis; L-threonine from L-aspartate: step 4/5. In terms of biological role, catalyzes the ATP-dependent phosphorylation of L-homoserine to L-homoserine phosphate. The polypeptide is Homoserine kinase (Mycobacterium sp. (strain JLS)).